Here is a 485-residue protein sequence, read N- to C-terminus: Glycogen synthase (485 aa).

Lysine 15 provides a ligand contact to ADP-alpha-D-glucose.

It belongs to the glycosyltransferase 1 family. Bacterial/plant glycogen synthase subfamily.

It catalyses the reaction [(1-&gt;4)-alpha-D-glucosyl](n) + ADP-alpha-D-glucose = [(1-&gt;4)-alpha-D-glucosyl](n+1) + ADP + H(+). It participates in glycan biosynthesis; glycogen biosynthesis. Functionally, synthesizes alpha-1,4-glucan chains using ADP-glucose. The polypeptide is Glycogen synthase (Geobacillus thermodenitrificans (strain NG80-2)).